A 345-amino-acid polypeptide reads, in one-letter code: Phosphoribosylformylglycinamidine cyclo-ligase (345 aa).

The protein belongs to the AIR synthase family.

The protein localises to the cytoplasm. It carries out the reaction 2-formamido-N(1)-(5-O-phospho-beta-D-ribosyl)acetamidine + ATP = 5-amino-1-(5-phospho-beta-D-ribosyl)imidazole + ADP + phosphate + H(+). It participates in purine metabolism; IMP biosynthesis via de novo pathway; 5-amino-1-(5-phospho-D-ribosyl)imidazole from N(2)-formyl-N(1)-(5-phospho-D-ribosyl)glycinamide: step 2/2. This chain is Phosphoribosylformylglycinamidine cyclo-ligase, found in Chromobacterium violaceum (strain ATCC 12472 / DSM 30191 / JCM 1249 / CCUG 213 / NBRC 12614 / NCIMB 9131 / NCTC 9757 / MK).